Reading from the N-terminus, the 184-residue chain is Large ribosomal subunit protein uL22 (184 aa).

Positions 160–184 (PEEEVAQKKKISQKKLKKQKLMARE) are disordered. A compositionally biased stretch (basic residues) spans 167–184 (KKKISQKKLKKQKLMARE).

It belongs to the universal ribosomal protein uL22 family. As to quaternary structure, component of the large ribosomal subunit.

Its subcellular location is the cytoplasm. In terms of biological role, component of the large ribosomal subunit. The ribosome is a large ribonucleoprotein complex responsible for the synthesis of proteins in the cell. The sequence is that of Large ribosomal subunit protein uL22 (RPL17) from Bos taurus (Bovine).